A 119-amino-acid polypeptide reads, in one-letter code: NADH-quinone oxidoreductase subunit A (119 aa).

A run of 3 helical transmembrane segments spans residues phenylalanine 7–glycine 27, leucine 63–valine 83, and isoleucine 88–valine 108.

It belongs to the complex I subunit 3 family. As to quaternary structure, NDH-1 is composed of 14 different subunits. Subunits NuoA, H, J, K, L, M, N constitute the membrane sector of the complex.

It is found in the cell membrane. It catalyses the reaction a quinone + NADH + 5 H(+)(in) = a quinol + NAD(+) + 4 H(+)(out). Functionally, NDH-1 shuttles electrons from NADH, via FMN and iron-sulfur (Fe-S) centers, to quinones in the respiratory chain. The immediate electron acceptor for the enzyme in this species is believed to be ubiquinone. Couples the redox reaction to proton translocation (for every two electrons transferred, four hydrogen ions are translocated across the cytoplasmic membrane), and thus conserves the redox energy in a proton gradient. This chain is NADH-quinone oxidoreductase subunit A, found in Polynucleobacter asymbioticus (strain DSM 18221 / CIP 109841 / QLW-P1DMWA-1) (Polynucleobacter necessarius subsp. asymbioticus).